The chain runs to 222 residues: Probable transaldolase (222 aa).

The active-site Schiff-base intermediate with substrate is Lys91.

This sequence belongs to the transaldolase family. Type 3B subfamily.

Its subcellular location is the cytoplasm. The catalysed reaction is D-sedoheptulose 7-phosphate + D-glyceraldehyde 3-phosphate = D-erythrose 4-phosphate + beta-D-fructose 6-phosphate. It functions in the pathway carbohydrate degradation; pentose phosphate pathway; D-glyceraldehyde 3-phosphate and beta-D-fructose 6-phosphate from D-ribose 5-phosphate and D-xylulose 5-phosphate (non-oxidative stage): step 2/3. Its function is as follows. Transaldolase is important for the balance of metabolites in the pentose-phosphate pathway. This Chlorobium limicola (strain DSM 245 / NBRC 103803 / 6330) protein is Probable transaldolase.